The chain runs to 668 residues: Packaging protein UL32 homolog (668 aa).

Residues 1 to 10 show a composition bias toward polar residues; the sequence is MNPSTHVSSN. The disordered stretch occupies residues 1–35; it reads MNPSTHVSSNGPTTPPHGPHTTFLPPTSPAPSTSS. Residues 19–35 show a composition bias toward low complexity; it reads PHTTFLPPTSPAPSTSS. Zn(2+) contacts are provided by cysteine 200, cysteine 203, histidine 276, and cysteine 282. Positions 200-282 are zinc finger 1; it reads CNLCAIISIC…FHLHFFINRC (83 aa). Composition is skewed to basic and acidic residues over residues 392–401 and 410–419; these read SEREDARMMM and GEKGGDDPGR. The interval 392-430 is disordered; the sequence is SEREDARMMMEEEEDEEGGEKGGDDPGRHNGGGTSGGFS. 4 residues coordinate Zn(2+): cysteine 459, cysteine 462, histidine 567, and cysteine 574. The zinc finger 2 stretch occupies residues 459-574; sequence CLLCELMACS…YKHFFCDPQC (116 aa).

The protein belongs to the herpesviridae UL32 protein family.

It is found in the host cytoplasm. The protein resides in the host nucleus. Its function is as follows. Plays a role in efficient localization of neo-synthesized capsids to nuclear replication compartments, thereby controlling cleavage and packaging of virus genomic DNA. The protein is Packaging protein UL32 homolog (UL52) of Homo sapiens (Human).